Reading from the N-terminus, the 183-residue chain is MERIKNFTSSKMDHCVHMFVNQLNTLRSSRASPSILDTILIDYLGQKIQLKKLSNIIVENVNTLRITLFDPKIKNNVEKAIISSKLDLIPIFINNYFQIKIPVLTEERRLQLIKLAKKMAENSRICIRNIRRLSNEKIKLFLKDKIISSDKERRLQHEVQDITNSYMEKINVILSKKEKDLLK.

It belongs to the RRF family.

It is found in the cytoplasm. Functionally, responsible for the release of ribosomes from messenger RNA at the termination of protein biosynthesis. May increase the efficiency of translation by recycling ribosomes from one round of translation to another. The protein is Ribosome-recycling factor of Buchnera aphidicola subsp. Baizongia pistaciae (strain Bp).